We begin with the raw amino-acid sequence, 161 residues long: GTP-dependent dephospho-CoA kinase (161 aa).

GTP is bound by residues Asp-40, Val-41, Val-42, Asp-59, Glu-112, and Glu-135.

Belongs to the GTP-dependent DPCK family.

The catalysed reaction is 3'-dephospho-CoA + GTP = GDP + CoA + H(+). The protein operates within cofactor biosynthesis; coenzyme A biosynthesis. Catalyzes the GTP-dependent phosphorylation of the 3'-hydroxyl group of dephosphocoenzyme A to form coenzyme A (CoA). The chain is GTP-dependent dephospho-CoA kinase from Methanocorpusculum labreanum (strain ATCC 43576 / DSM 4855 / Z).